The primary structure comprises 203 residues: Glycerol-3-phosphate acyltransferase (203 aa).

The next 5 membrane-spanning stretches (helical) occupy residues 10 to 30 (MLIL…GLIL), 59 to 79 (GAAA…VLLA), 87 to 107 (AAQV…WLGF), 116 to 136 (FLGL…LSWL), and 160 to 180 (LVLL…LMVF).

Belongs to the PlsY family. In terms of assembly, probably interacts with PlsX.

It localises to the cell inner membrane. It catalyses the reaction an acyl phosphate + sn-glycerol 3-phosphate = a 1-acyl-sn-glycero-3-phosphate + phosphate. It functions in the pathway lipid metabolism; phospholipid metabolism. Functionally, catalyzes the transfer of an acyl group from acyl-phosphate (acyl-PO(4)) to glycerol-3-phosphate (G3P) to form lysophosphatidic acid (LPA). This enzyme utilizes acyl-phosphate as fatty acyl donor, but not acyl-CoA or acyl-ACP. The sequence is that of Glycerol-3-phosphate acyltransferase from Ruegeria pomeroyi (strain ATCC 700808 / DSM 15171 / DSS-3) (Silicibacter pomeroyi).